A 615-amino-acid polypeptide reads, in one-letter code: Probable transporter mch1 (615 aa).

Positions 1 to 35 are disordered; sequence MTGSIGQAPAIDKRDFDINRRSSTPHETAAQEDEA. Positions 11–20 are enriched in basic and acidic residues; that stretch reads IDKRDFDINR. A helical transmembrane segment spans residues 84-104; sequence FVWGVITCLGAGSITAFSLYG. Asn-112 is a glycosylation site (N-linked (GlcNAc...) asparagine). 5 consecutive transmembrane segments (helical) span residues 120 to 140, 147 to 167, 182 to 202, 218 to 238, and 261 to 281; these read EVSI…GYLC, PLTL…AFVY, FWVM…MYLA, GIIL…QSQV, and FLFL…ALRI. A glycan (N-linked (GlcNAc...) asparagine) is linked at Asn-329. 6 helical membrane passes run 371 to 391, 428 to 448, 477 to 497, 512 to 532, 538 to 558, and 583 to 603; these read IFLA…VTGP, IIAL…DLFA, LAFL…LASP, LVGL…SVVW, GTNW…WGVI, and FGFW…AWLV.

The protein belongs to the major facilitator superfamily.

Its subcellular location is the vacuole membrane. In terms of biological role, probable transporter. The sequence is that of Probable transporter mch1 (mch1) from Emericella nidulans (strain FGSC A4 / ATCC 38163 / CBS 112.46 / NRRL 194 / M139) (Aspergillus nidulans).